The primary structure comprises 308 residues: MNKLRIATRGSALALWQSKYIQNLIENNTEVEVELQSMKTKGDVILDTPLAKIGGKGLFTKELEESMLRGESDLAVHSLKDVPVVFPKGLILTAISEREDVRDSFVSEKFASFNELPKGAKVGTTSLRRKMQLLIKRPDLKIISLRGNINTRLRKLKENEFDAIILASAGLKRLNLMENIKYFVPFSLDEMIPAMGQGALGIECVDKSEVIEILKFINNENSVIATTIERDFVAKLNGGCQVPIGVNAEISGDIIKVRAIVGLPDGSEFIKDKREISKADFKNFGTKLADEFISRGAIELLKRAEEMA.

Position 240 is an S-(dipyrrolylmethanemethyl)cysteine (cysteine 240).

Belongs to the HMBS family. Monomer. The cofactor is dipyrromethane.

The enzyme catalyses 4 porphobilinogen + H2O = hydroxymethylbilane + 4 NH4(+). Its pathway is porphyrin-containing compound metabolism; protoporphyrin-IX biosynthesis; coproporphyrinogen-III from 5-aminolevulinate: step 2/4. Tetrapolymerization of the monopyrrole PBG into the hydroxymethylbilane pre-uroporphyrinogen in several discrete steps. In Campylobacter hominis (strain ATCC BAA-381 / DSM 21671 / CCUG 45161 / LMG 19568 / NCTC 13146 / CH001A), this protein is Porphobilinogen deaminase.